We begin with the raw amino-acid sequence, 286 residues long: Bifunctional protein FolD (286 aa).

Residues 165–167 (GRS) and S190 each bind NADP(+).

The protein belongs to the tetrahydrofolate dehydrogenase/cyclohydrolase family. Homodimer.

It catalyses the reaction (6R)-5,10-methylene-5,6,7,8-tetrahydrofolate + NADP(+) = (6R)-5,10-methenyltetrahydrofolate + NADPH. The catalysed reaction is (6R)-5,10-methenyltetrahydrofolate + H2O = (6R)-10-formyltetrahydrofolate + H(+). It participates in one-carbon metabolism; tetrahydrofolate interconversion. Functionally, catalyzes the oxidation of 5,10-methylenetetrahydrofolate to 5,10-methenyltetrahydrofolate and then the hydrolysis of 5,10-methenyltetrahydrofolate to 10-formyltetrahydrofolate. The polypeptide is Bifunctional protein FolD (Staphylococcus aureus (strain USA300)).